A 303-amino-acid chain; its full sequence is Glycine--tRNA ligase alpha subunit (303 aa).

This sequence belongs to the class-II aminoacyl-tRNA synthetase family. In terms of assembly, tetramer of two alpha and two beta subunits.

Its subcellular location is the cytoplasm. The catalysed reaction is tRNA(Gly) + glycine + ATP = glycyl-tRNA(Gly) + AMP + diphosphate. The polypeptide is Glycine--tRNA ligase alpha subunit (Methylobacterium radiotolerans (strain ATCC 27329 / DSM 1819 / JCM 2831 / NBRC 15690 / NCIMB 10815 / 0-1)).